Here is a 49-residue protein sequence, read N- to C-terminus: uncharacterized protein (49 aa).

Residues 8-28 form a helical membrane-spanning segment; the sequence is FFLFSSGVLQATTLLLVILIF.

Its subcellular location is the cell membrane. This is an uncharacterized protein from Bacillus subtilis (strain 168).